A 158-amino-acid polypeptide reads, in one-letter code: NAD(P)H-quinone oxidoreductase subunit J, chloroplastic (158 aa).

It belongs to the complex I 30 kDa subunit family. As to quaternary structure, NDH is composed of at least 16 different subunits, 5 of which are encoded in the nucleus.

The protein localises to the plastid. Its subcellular location is the chloroplast thylakoid membrane. The enzyme catalyses a plastoquinone + NADH + (n+1) H(+)(in) = a plastoquinol + NAD(+) + n H(+)(out). The catalysed reaction is a plastoquinone + NADPH + (n+1) H(+)(in) = a plastoquinol + NADP(+) + n H(+)(out). In terms of biological role, NDH shuttles electrons from NAD(P)H:plastoquinone, via FMN and iron-sulfur (Fe-S) centers, to quinones in the photosynthetic chain and possibly in a chloroplast respiratory chain. The immediate electron acceptor for the enzyme in this species is believed to be plastoquinone. Couples the redox reaction to proton translocation, and thus conserves the redox energy in a proton gradient. The polypeptide is NAD(P)H-quinone oxidoreductase subunit J, chloroplastic (Psilotum nudum (Whisk fern)).